The primary structure comprises 504 residues: Cytochrome P450 3A16 (504 aa).

C443 contributes to the heme binding site.

This sequence belongs to the cytochrome P450 family. Heme is required as a cofactor.

The protein localises to the endoplasmic reticulum membrane. It is found in the microsome membrane. It catalyses the reaction an organic molecule + reduced [NADPH--hemoprotein reductase] + O2 = an alcohol + oxidized [NADPH--hemoprotein reductase] + H2O + H(+). In terms of biological role, cytochromes P450 are a group of heme-thiolate monooxygenases. In liver microsomes, this enzyme is involved in an NADPH-dependent electron transport pathway. It oxidizes a variety of structurally unrelated compounds, including steroids, fatty acids, and xenobiotics. This Mus musculus (Mouse) protein is Cytochrome P450 3A16 (Cyp3a16).